The chain runs to 341 residues: Ketol-acid reductoisomerase (NADP(+)) (341 aa).

Positions 2-182 constitute a KARI N-terminal Rossmann domain; the sequence is TDIVYDKDAD…GGLRAGGIRT (181 aa). NADP(+) is bound by residues 25–28, lysine 48, serine 51, serine 53, and 83–86; these read YGSQ and DQHQ. The active site involves histidine 108. Glycine 134 serves as a coordination point for NADP(+). The region spanning 183 to 328 is the KARI C-terminal knotted domain; that stretch reads TFTEETETDL…RELRKLFAWN (146 aa). Residues aspartate 191, glutamate 195, glutamate 227, and glutamate 231 each coordinate Mg(2+). Residue serine 252 coordinates substrate.

The protein belongs to the ketol-acid reductoisomerase family. It depends on Mg(2+) as a cofactor.

The catalysed reaction is (2R)-2,3-dihydroxy-3-methylbutanoate + NADP(+) = (2S)-2-acetolactate + NADPH + H(+). It carries out the reaction (2R,3R)-2,3-dihydroxy-3-methylpentanoate + NADP(+) = (S)-2-ethyl-2-hydroxy-3-oxobutanoate + NADPH + H(+). It functions in the pathway amino-acid biosynthesis; L-isoleucine biosynthesis; L-isoleucine from 2-oxobutanoate: step 2/4. Its pathway is amino-acid biosynthesis; L-valine biosynthesis; L-valine from pyruvate: step 2/4. In terms of biological role, involved in the biosynthesis of branched-chain amino acids (BCAA). Catalyzes an alkyl-migration followed by a ketol-acid reduction of (S)-2-acetolactate (S2AL) to yield (R)-2,3-dihydroxy-isovalerate. In the isomerase reaction, S2AL is rearranged via a Mg-dependent methyl migration to produce 3-hydroxy-3-methyl-2-ketobutyrate (HMKB). In the reductase reaction, this 2-ketoacid undergoes a metal-dependent reduction by NADPH to yield (R)-2,3-dihydroxy-isovalerate. The chain is Ketol-acid reductoisomerase (NADP(+)) from Clavibacter sepedonicus (Clavibacter michiganensis subsp. sepedonicus).